Here is a 513-residue protein sequence, read N- to C-terminus: Lysine--tRNA ligase (513 aa).

Over residues 1-11 (MTEPTQPNAAQ) the composition is skewed to polar residues. The segment at 1-22 (MTEPTQPNAAQPNVVPEVDDNK) is disordered. The Mg(2+) site is built by Glu-423 and Glu-430.

The protein belongs to the class-II aminoacyl-tRNA synthetase family. As to quaternary structure, homodimer. Mg(2+) is required as a cofactor.

The protein localises to the cytoplasm. The catalysed reaction is tRNA(Lys) + L-lysine + ATP = L-lysyl-tRNA(Lys) + AMP + diphosphate. The sequence is that of Lysine--tRNA ligase from Paraburkholderia xenovorans (strain LB400).